We begin with the raw amino-acid sequence, 432 residues long: UDP-N-acetylmuramoylalanine--D-glutamate ligase (432 aa).

ATP is bound at residue 98-104; that stretch reads GTNGKST.

The protein belongs to the MurCDEF family.

Its subcellular location is the cytoplasm. It carries out the reaction UDP-N-acetyl-alpha-D-muramoyl-L-alanine + D-glutamate + ATP = UDP-N-acetyl-alpha-D-muramoyl-L-alanyl-D-glutamate + ADP + phosphate + H(+). It participates in cell wall biogenesis; peptidoglycan biosynthesis. In terms of biological role, cell wall formation. Catalyzes the addition of glutamate to the nucleotide precursor UDP-N-acetylmuramoyl-L-alanine (UMA). This Fusobacterium nucleatum subsp. nucleatum (strain ATCC 25586 / DSM 15643 / BCRC 10681 / CIP 101130 / JCM 8532 / KCTC 2640 / LMG 13131 / VPI 4355) protein is UDP-N-acetylmuramoylalanine--D-glutamate ligase.